We begin with the raw amino-acid sequence, 184 residues long: Putative F-box protein At4g22420 (184 aa).

One can recognise an F-box domain in the interval 1 to 46 (MAECPTDLINEMFLRLRATTLKKCRVLSKPCFSLIDSPEKRVIERS). Residues 68–126 (DDDEEEGNELKKSQARRNGVAKGEGNGNKVNGEAQEEVDDEEDDDDDASKGRGKHSRHV) are disordered. Positions 85–100 (NGVAKGEGNGNKVNGE) are enriched in low complexity. Residues 101 to 114 (AQEEVDDEEDDDDD) show a composition bias toward acidic residues.

The sequence is that of Putative F-box protein At4g22420 from Arabidopsis thaliana (Mouse-ear cress).